A 215-amino-acid polypeptide reads, in one-letter code: 3-demethoxyubiquinol 3-hydroxylase (215 aa).

6 residues coordinate Fe cation: Glu-64, Glu-94, His-97, Glu-146, Glu-178, and His-181.

It belongs to the COQ7 family. The cofactor is Fe cation.

Its subcellular location is the cell membrane. It carries out the reaction a 5-methoxy-2-methyl-3-(all-trans-polyprenyl)benzene-1,4-diol + AH2 + O2 = a 3-demethylubiquinol + A + H2O. It participates in cofactor biosynthesis; ubiquinone biosynthesis. Its function is as follows. Catalyzes the hydroxylation of 2-nonaprenyl-3-methyl-6-methoxy-1,4-benzoquinol during ubiquinone biosynthesis. The chain is 3-demethoxyubiquinol 3-hydroxylase from Coxiella burnetii (strain RSA 331 / Henzerling II).